The chain runs to 814 residues: DNA ligase (814 aa).

NAD(+)-binding positions include 46-50 (DAEYD), 95-96 (SL), and Glu-129. Residue Lys-131 is the N6-AMP-lysine intermediate of the active site. NAD(+) is bound by residues Arg-152, Glu-189, Lys-305, and Lys-329. 4 residues coordinate Zn(2+): Cys-434, Cys-437, Cys-458, and Cys-464. The segment at 525–548 (LSAQRRSEGEPAPKKPTKKKGEEE) is disordered. The BRCT domain occupies 735 to 814 (TSAAAFAGKT…DDWLAMLAEA (80 aa)).

It belongs to the NAD-dependent DNA ligase family. LigA subfamily. It depends on Mg(2+) as a cofactor. Mn(2+) is required as a cofactor.

The catalysed reaction is NAD(+) + (deoxyribonucleotide)n-3'-hydroxyl + 5'-phospho-(deoxyribonucleotide)m = (deoxyribonucleotide)n+m + AMP + beta-nicotinamide D-nucleotide.. Functionally, DNA ligase that catalyzes the formation of phosphodiester linkages between 5'-phosphoryl and 3'-hydroxyl groups in double-stranded DNA using NAD as a coenzyme and as the energy source for the reaction. It is essential for DNA replication and repair of damaged DNA. The protein is DNA ligase of Methylorubrum extorquens (strain PA1) (Methylobacterium extorquens).